Consider the following 469-residue polypeptide: Ribulose bisphosphate carboxylase large chain (469 aa).

The propeptide occupies 1–2; sequence MS. The residue at position 3 (proline 3) is an N-acetylproline. Lysine 14 carries the post-translational modification N6,N6,N6-trimethyllysine. Residues asparagine 123 and threonine 173 each coordinate substrate. Lysine 175 serves as the catalytic Proton acceptor. Position 177 (lysine 177) interacts with substrate. Mg(2+) is bound by residues lysine 201, aspartate 203, and glutamate 204. Residue lysine 201 is modified to N6-carboxylysine. Histidine 294 functions as the Proton acceptor in the catalytic mechanism. 3 residues coordinate substrate: arginine 295, histidine 327, and serine 379.

The protein belongs to the RuBisCO large chain family. Type I subfamily. As to quaternary structure, heterohexadecamer of 8 large chains and 8 small chains; disulfide-linked. The disulfide link is formed within the large subunit homodimers. Mg(2+) is required as a cofactor. In terms of processing, the disulfide bond which can form in the large chain dimeric partners within the hexadecamer appears to be associated with oxidative stress and protein turnover.

The protein resides in the plastid. It is found in the chloroplast. It carries out the reaction 2 (2R)-3-phosphoglycerate + 2 H(+) = D-ribulose 1,5-bisphosphate + CO2 + H2O. The enzyme catalyses D-ribulose 1,5-bisphosphate + O2 = 2-phosphoglycolate + (2R)-3-phosphoglycerate + 2 H(+). Functionally, ruBisCO catalyzes two reactions: the carboxylation of D-ribulose 1,5-bisphosphate, the primary event in carbon dioxide fixation, as well as the oxidative fragmentation of the pentose substrate in the photorespiration process. Both reactions occur simultaneously and in competition at the same active site. The chain is Ribulose bisphosphate carboxylase large chain from Brexia madagascariensis.